We begin with the raw amino-acid sequence, 198 residues long: Transcription factor BHLH133 (198 aa).

The segment at 114-127 (SAESSQSYYAKNRR) is basic motif; degenerate. The region spanning 114-163 (SAESSQSYYAKNRRQRINERLRILQELIPNGTKVDISTMLEEAIQYVKFL) is the bHLH domain. Residues 128–163 (QRINERLRILQELIPNGTKVDISTMLEEAIQYVKFL) are helix-loop-helix motif.

This sequence belongs to the bHLH protein family.

The protein localises to the nucleus. Transcription factor that acts as a regulator of iron homeostasis. May act as negative regulator of iron transportation from root to shoot. Does not seem to be involved in the suppression of the induction of iron deficiency responsive genes. In Oryza sativa subsp. japonica (Rice), this protein is Transcription factor BHLH133.